An 89-amino-acid chain; its full sequence is Large ribosomal subunit protein uL24 (89 aa).

It belongs to the universal ribosomal protein uL24 family. In terms of assembly, part of the 50S ribosomal subunit.

Its function is as follows. One of two assembly initiator proteins, it binds directly to the 5'-end of the 23S rRNA, where it nucleates assembly of the 50S subunit. In terms of biological role, one of the proteins that surrounds the polypeptide exit tunnel on the outside of the subunit. This chain is Large ribosomal subunit protein uL24, found in Oenococcus oeni (strain ATCC BAA-331 / PSU-1).